Here is a 549-residue protein sequence, read N- to C-terminus: Hydroxylamine reductase (549 aa).

4 residues coordinate [2Fe-2S] cluster: Cys-3, Cys-6, Cys-18, and Cys-25. 8 residues coordinate hybrid [4Fe-2O-2S] cluster: His-248, Glu-272, Cys-316, Cys-404, Cys-432, Cys-457, Glu-491, and Lys-493. Cys-404 carries the post-translational modification Cysteine persulfide.

The protein belongs to the HCP family. [2Fe-2S] cluster serves as cofactor. Hybrid [4Fe-2O-2S] cluster is required as a cofactor.

The protein localises to the cytoplasm. The enzyme catalyses A + NH4(+) + H2O = hydroxylamine + AH2 + H(+). Catalyzes the reduction of hydroxylamine to form NH(3) and H(2)O. In Aeromonas hydrophila subsp. hydrophila (strain ATCC 7966 / DSM 30187 / BCRC 13018 / CCUG 14551 / JCM 1027 / KCTC 2358 / NCIMB 9240 / NCTC 8049), this protein is Hydroxylamine reductase.